The sequence spans 575 residues: Triokinase/FMN cyclase (575 aa).

In terms of domain architecture, DhaK spans 9-336 (SVAGCADDAL…IDAETTAAAW (328 aa)). Residues 56 to 59 (GSGH), Lys-109, and Asp-114 each bind dihydroxyacetone. The active-site Tele-hemiaminal-histidine intermediate is the His-221. A disordered region spans residues 348–367 (KRSRVAPAEPQEAPDSTAAG). Phosphoserine is present on Ser-350. Positions 372-571 (KRMALVLERV…AAAILRAILE (200 aa)) constitute a DhaL domain. Residues 401 to 404 (DGDC), 446 to 447 (SS), Gly-486, and 494 to 495 (TM) each bind ATP. Phosphoserine is present on residues Ser-511 and Ser-545. An ATP-binding site is contributed by 556 to 558 (DPG).

Belongs to the dihydroxyacetone kinase (DAK) family. As to quaternary structure, homodimer. Interacts with IFIH1 (via the CARD domains), the interaction is inhibited by viral infection. It depends on Mg(2+) as a cofactor. Mn(2+) serves as cofactor. Requires Co(2+) as cofactor. In terms of tissue distribution, detected in erythrocytes (at protein level).

The catalysed reaction is dihydroxyacetone + ATP = dihydroxyacetone phosphate + ADP + H(+). It carries out the reaction D-glyceraldehyde + ATP = D-glyceraldehyde 3-phosphate + ADP + H(+). The enzyme catalyses FAD = riboflavin cyclic-4',5'-phosphate + AMP + H(+). With respect to regulation, each activity is inhibited by the substrate(s) of the other. Functionally, catalyzes both the phosphorylation of dihydroxyacetone and of glyceraldehyde, and the splitting of ribonucleoside diphosphate-X compounds among which FAD is the best substrate. Represses IFIH1-mediated cellular antiviral response. The chain is Triokinase/FMN cyclase from Homo sapiens (Human).